A 295-amino-acid polypeptide reads, in one-letter code: MPSLKEVRNRIASVNSTQQITKAMKMVSAAKLRRAQDRAMKIRPYAEKLNGILQNIAASLEDGADNVYAEERELKRLLIVVVTSDRGLAGAFNANIVKAANALIEEKYSNLYQANKVDFICIGKKGAEAITKRGESANLEYQGLFQNLSFDTARGASEYVMNAYLTGKYDRVEVIYNEFKNVATQIIRTEQFLPIKGQALSAVKHSATEVDYIFEPSKEEIVKELIPKSLKVQFYKYLLESNASEHGARMTAMDKATENAKEMLKALKLTYNRSRQAAITKEILEIVGGAEALNN.

Belongs to the ATPase gamma chain family. As to quaternary structure, F-type ATPases have 2 components, CF(1) - the catalytic core - and CF(0) - the membrane proton channel. CF(1) has five subunits: alpha(3), beta(3), gamma(1), delta(1), epsilon(1). CF(0) has three main subunits: a, b and c.

It is found in the cell inner membrane. Functionally, produces ATP from ADP in the presence of a proton gradient across the membrane. The gamma chain is believed to be important in regulating ATPase activity and the flow of protons through the CF(0) complex. In Cytophaga hutchinsonii (strain ATCC 33406 / DSM 1761 / CIP 103989 / NBRC 15051 / NCIMB 9469 / D465), this protein is ATP synthase gamma chain.